Reading from the N-terminus, the 358-residue chain is Biotin synthase (358 aa).

Positions K47–A306 constitute a Radical SAM core domain. [4Fe-4S] cluster is bound by residues C65, C69, and C72. [2Fe-2S] cluster contacts are provided by S142, C174, C233, and R309.

The protein belongs to the radical SAM superfamily. Biotin synthase family. Homodimer. [4Fe-4S] cluster serves as cofactor. It depends on [2Fe-2S] cluster as a cofactor.

It carries out the reaction (4R,5S)-dethiobiotin + (sulfur carrier)-SH + 2 reduced [2Fe-2S]-[ferredoxin] + 2 S-adenosyl-L-methionine = (sulfur carrier)-H + biotin + 2 5'-deoxyadenosine + 2 L-methionine + 2 oxidized [2Fe-2S]-[ferredoxin]. It participates in cofactor biosynthesis; biotin biosynthesis; biotin from 7,8-diaminononanoate: step 2/2. Catalyzes the conversion of dethiobiotin (DTB) to biotin by the insertion of a sulfur atom into dethiobiotin via a radical-based mechanism. The protein is Biotin synthase of Methanocaldococcus jannaschii (strain ATCC 43067 / DSM 2661 / JAL-1 / JCM 10045 / NBRC 100440) (Methanococcus jannaschii).